The primary structure comprises 229 residues: Probable endo-1,4-beta-xylanase A (229 aa).

Positions M1–A18 are cleaved as a signal peptide. N-linked (GlcNAc...) asparagine glycans are attached at residues N30 and N100. Residues A41–Y229 form the GH11 domain. The active-site Nucleophile is E125. The Proton donor role is filled by E216.

It belongs to the glycosyl hydrolase 11 (cellulase G) family.

The protein localises to the secreted. The catalysed reaction is Endohydrolysis of (1-&gt;4)-beta-D-xylosidic linkages in xylans.. Its pathway is glycan degradation; xylan degradation. Functionally, endo-1,4-beta-xylanase involved in the hydrolysis of xylan, a major structural heterogeneous polysaccharide found in plant biomass representing the second most abundant polysaccharide in the biosphere, after cellulose. This chain is Probable endo-1,4-beta-xylanase A (xlnA), found in Aspergillus clavatus (strain ATCC 1007 / CBS 513.65 / DSM 816 / NCTC 3887 / NRRL 1 / QM 1276 / 107).